The sequence spans 681 residues: Kojibiose hydrolase (681 aa).

Residues 1–23 (MKKYIFNHVFFFLMLCGSNYLYS) form the signal peptide. Beta-D-glucose is bound by residues Arg-74, Trp-343, Asp-344, Trp-391, Glu-392, Thr-407, Glu-472, Trp-473, Lys-538, Gln-539, and Asp-573. Glu-472 (proton donor) is an active-site residue. The Proton acceptor role is filled by Glu-616.

Belongs to the glycosyl hydrolase 65 family. As to quaternary structure, homohexamer; dimer of trimers.

Its subcellular location is the periplasm. It catalyses the reaction kojibiose + H2O = beta-D-glucose + D-glucose. In terms of biological role, glycosidase that specifically hydrolyzes kojibiose to beta-glucose and glucose. Also hydrolyzes, with lower catalytic efficiency, longer kojioligosaccharides (from kojitriose to kojipentaose) and shorter oligosaccharides produced by the degradation of dextran-containing alpha-1,2 branches. Probably acts on alpha-(1-&gt;2)-glucosyl isomaltooligosaccharides. Shows weak activity with nigerose but has no activity toward p-nitrophenyl alpha-glucopyranoside, which is a general substrate of exo-acting alpha-glucoside hydrolases. Has a strict specificity for alpha-1,2-glucosidic linkages. Catalyzes the hydrolytic reaction via an anomer-inverting mechanism. In Flavobacterium johnsoniae (strain ATCC 17061 / DSM 2064 / JCM 8514 / BCRC 14874 / CCUG 350202 / NBRC 14942 / NCIMB 11054 / UW101) (Cytophaga johnsonae), this protein is Kojibiose hydrolase.